The chain runs to 610 residues: Solute carrier family 2, facilitated glucose transporter member 12 (610 aa).

The Cytoplasmic portion of the chain corresponds to 1–49; sequence MDAPEESIRMTSDPQSKIYVQNPDTHIHLEQGPSAKSGNGRALVLCSVS. A helical transmembrane segment spans residues 50–70; it reads VACLSGLLMGYEMSLISGALL. Topologically, residues 71–84 are extracellular; it reads QLRDVLTLSCPEQE. A helical transmembrane segment spans residues 85 to 105; that stretch reads QVVGSLLLGAFLLSLGGGTIL. Residues 106–118 are Cytoplasmic-facing; it reads DHYGRRFTIILTA. Residues 119 to 139 form a helical membrane-spanning segment; sequence LLCVLGTLLSVCVVSFWALVV. The Extracellular segment spans residues 140–141; sequence GR. Residues 142-162 form a helical membrane-spanning segment; that stretch reads MLVGMSVALSGTASCLYAAEV. Over 163-176 the chain is Cytoplasmic; it reads APAAWRGRCVCVYE. Residues 177–197 form a helical membrane-spanning segment; it reads LMVVLGMLLGFGLSWAFAGVP. Over 198 to 201 the chain is Extracellular; that stretch reads DGWR. A helical membrane pass occupies residues 202 to 222; the sequence is FTFGGALLPALLQAGVMPLLP. At 223–286 the chain is on the cytoplasmic side; that stretch reads DSPRFLLAQQ…FQSRDNMLQR (64 aa). Residues 287–307 traverse the membrane as a helical segment; sequence LLVGAALVFLQQATGQPNILA. The Extracellular portion of the chain corresponds to 308-325; that stretch reads YASTVLSSVGFHGNEAAT. A helical transmembrane segment spans residues 326-346; that stretch reads LASTGFGVVKVGGTIPAIFLV. Over 347-353 the chain is Cytoplasmic; sequence DKVGPKA. The helical transmembrane segment at 354-374 threads the bilayer; it reads LLCVGVVVMMLSTATLGAITM. The Extracellular segment spans residues 375–475; it reads QSRTHVSSLC…LHEVSPSLKW (101 aa). N-linked (GlcNAc...) asparagine glycans are attached at residues N392, N429, and N438. A helical membrane pass occupies residues 476–496; the sequence is ISLVSLLVYVAGFSISLGPMV. Over 497 to 511 the chain is Cytoplasmic; it reads HVVLSAIFPTGIRGK. Residues 512-532 traverse the membrane as a helical segment; it reads AVSVISAFNWATNLLISMTFL. Topologically, residues 533 to 542 are extracellular; the sequence is TLTERIGLPT. The helical transmembrane segment at 543–563 threads the bilayer; that stretch reads VIFSYSAMSFLLVVFVIVFVP. Residues 564 to 610 are Cytoplasmic-facing; sequence ETKGRSLEQISKELAMKNHLRGTLLCHRRKHKATAQPSQEEKALATV.

The protein belongs to the major facilitator superfamily. Sugar transporter (TC 2.A.1.1) family. Glucose transporter subfamily. Expressed in the main insulin-sensitive tissues, such as cardiac muscle, skeletal muscle and adipose tissue.

Its subcellular location is the cell membrane. The protein localises to the endomembrane system. It localises to the cytoplasm. The protein resides in the perinuclear region. The catalysed reaction is D-glucose(out) = D-glucose(in). Its function is as follows. Insulin-regulated facilitative glucose transporter. The sequence is that of Solute carrier family 2, facilitated glucose transporter member 12 from Danio rerio (Zebrafish).